The sequence spans 265 residues: 4-hydroxy-tetrahydrodipicolinate reductase (265 aa).

9–14 (GPRGRM) contacts NAD(+). Residue Arg37 participates in NADP(+) binding. NAD(+) is bound by residues 98–100 (GTT) and 124–127 (APNF). The active-site Proton donor/acceptor is the His154. His155 contacts (S)-2,3,4,5-tetrahydrodipicolinate. Lys158 functions as the Proton donor in the catalytic mechanism. Residue 164–165 (GT) coordinates (S)-2,3,4,5-tetrahydrodipicolinate.

This sequence belongs to the DapB family.

It is found in the cytoplasm. It catalyses the reaction (S)-2,3,4,5-tetrahydrodipicolinate + NAD(+) + H2O = (2S,4S)-4-hydroxy-2,3,4,5-tetrahydrodipicolinate + NADH + H(+). It carries out the reaction (S)-2,3,4,5-tetrahydrodipicolinate + NADP(+) + H2O = (2S,4S)-4-hydroxy-2,3,4,5-tetrahydrodipicolinate + NADPH + H(+). It participates in amino-acid biosynthesis; L-lysine biosynthesis via DAP pathway; (S)-tetrahydrodipicolinate from L-aspartate: step 4/4. Its function is as follows. Catalyzes the conversion of 4-hydroxy-tetrahydrodipicolinate (HTPA) to tetrahydrodipicolinate. The chain is 4-hydroxy-tetrahydrodipicolinate reductase from Geobacillus kaustophilus (strain HTA426).